We begin with the raw amino-acid sequence, 233 residues long: Large ribosomal subunit protein uL1 (233 aa).

This sequence belongs to the universal ribosomal protein uL1 family. Part of the 50S ribosomal subunit.

Its function is as follows. Binds directly to 23S rRNA. The L1 stalk is quite mobile in the ribosome, and is involved in E site tRNA release. Functionally, protein L1 is also a translational repressor protein, it controls the translation of the L11 operon by binding to its mRNA. The chain is Large ribosomal subunit protein uL1 from Campylobacter jejuni subsp. doylei (strain ATCC BAA-1458 / RM4099 / 269.97).